A 350-amino-acid chain; its full sequence is Geranylgeranyl pyrophosphate synthase (350 aa).

Isopentenyl diphosphate-binding residues include lysine 66, arginine 69, and histidine 98. Residues aspartate 105 and aspartate 109 each contribute to the Mg(2+) site. Arginine 114 contributes to the dimethylallyl diphosphate binding site. Arginine 115 provides a ligand contact to isopentenyl diphosphate. Lysine 200, threonine 201, glutamine 236, asparagine 243, and lysine 263 together coordinate dimethylallyl diphosphate.

It belongs to the FPP/GGPP synthase family. The cofactor is Mg(2+).

It catalyses the reaction isopentenyl diphosphate + dimethylallyl diphosphate = (2E)-geranyl diphosphate + diphosphate. The catalysed reaction is isopentenyl diphosphate + (2E)-geranyl diphosphate = (2E,6E)-farnesyl diphosphate + diphosphate. The enzyme catalyses isopentenyl diphosphate + (2E,6E)-farnesyl diphosphate = (2E,6E,10E)-geranylgeranyl diphosphate + diphosphate. It participates in secondary metabolite biosynthesis; terpenoid biosynthesis. In terms of biological role, geranylgeranyl pyrophosphate synthase; part of the gene cluster that mediates the biosynthesis of pleuromutilin, a tricyclic diterpene showing antibacterial properties. The geranylgeranyl diphosphate (GGPP) synthase ple4 catalyzes the first step in pleuromutilin biosynthesis. GGPP is then substrate of the premutilin synthase (PS) ple3 to yield premutilin. Premutilin synthase is a bifunctional enzyme composed of the fusion of a class II diterpene cyclase (DTC) and a class I diterpene synthase (DTS), with the corresponding domains and active sites containing characteristic aspartate-rich motifs. GGPP is first converted to mutildienyl-diphosphate (MPP) at the class II DTC site. MPP is subsequently further cyclized at the class I DTS site, followed by a 1,5-hydride shift and addition of water prior to terminating deprotonation, to yield premutilin. The cytochrome P450 monooxygenases ple5 and ple6 hydroxylate premutilin at C-11 and C-3, respectively, producing 11-hydroxypremutilin and 3-hydroxypremutilin. The combination of the actions of both ple5 and ple6 leads to the production of 3,11-dihydroxypremutilin. The short chain dehydrogenase ple7 further converts 3,11-dihydroxypremutilin into mutilin. The acetyltransferase ple2 then acetylates mutilin to produce 14-O-acetylmutilin. Finally, the cytochrome P450 monooxygenase ple1 catalyzes hydroxylation on the alpha position of the acetyl side chain of 14-O-acetylmutilin to yield pleuromutilin. This Rhodocybe pseudopiperita (Clitopilus pseudopiperitus) protein is Geranylgeranyl pyrophosphate synthase.